Here is a 330-residue protein sequence, read N- to C-terminus: Probable integrase/recombinase protein MJ0367 (330 aa).

One can recognise a Core-binding (CB) domain in the interval 22–112 (IEETDKIKEY…LLKVFYRVLR (91 aa)). Residues 136-325 (QHYDAVDAEM…RAESLEFIKK (190 aa)) form the Tyr recombinase domain. Catalysis depends on residues Arg-177, Lys-202, His-275, Arg-278, and His-301. The active-site O-(3'-phospho-DNA)-tyrosine intermediate is the Tyr-310.

It belongs to the 'phage' integrase family.

The chain is Probable integrase/recombinase protein MJ0367 from Methanocaldococcus jannaschii (strain ATCC 43067 / DSM 2661 / JAL-1 / JCM 10045 / NBRC 100440) (Methanococcus jannaschii).